The primary structure comprises 226 residues: Ribonuclease 3 (226 aa).

One can recognise an RNase III domain in the interval 6–128 (VNQLQKKLGY…LIGAIFLDSD (123 aa)). Position 41 (glutamate 41) interacts with Mg(2+). Residue aspartate 45 is part of the active site. Mg(2+)-binding residues include aspartate 114 and glutamate 117. The active site involves glutamate 117. The DRBM domain maps to 155 to 225 (DPKTRLQEYL…AEQALIQLEL (71 aa)).

It belongs to the ribonuclease III family. In terms of assembly, homodimer. The cofactor is Mg(2+).

It localises to the cytoplasm. It carries out the reaction Endonucleolytic cleavage to 5'-phosphomonoester.. Digests double-stranded RNA. Involved in the processing of primary rRNA transcript to yield the immediate precursors to the large and small rRNAs (23S and 16S). Processes some mRNAs, and tRNAs when they are encoded in the rRNA operon. Processes pre-crRNA and tracrRNA of type II CRISPR loci if present in the organism. The chain is Ribonuclease 3 from Proteus mirabilis (strain HI4320).